We begin with the raw amino-acid sequence, 103 residues long: Large ribosomal subunit protein bL21 (103 aa).

It belongs to the bacterial ribosomal protein bL21 family. Part of the 50S ribosomal subunit. Contacts protein L20.

Functionally, this protein binds to 23S rRNA in the presence of protein L20. This chain is Large ribosomal subunit protein bL21, found in Treponema denticola (strain ATCC 35405 / DSM 14222 / CIP 103919 / JCM 8153 / KCTC 15104).